Reading from the N-terminus, the 336-residue chain is Histidinol-phosphate aminotransferase (336 aa).

The residue at position 204 (K204) is an N6-(pyridoxal phosphate)lysine.

It belongs to the class-II pyridoxal-phosphate-dependent aminotransferase family. Histidinol-phosphate aminotransferase subfamily. Requires pyridoxal 5'-phosphate as cofactor.

The catalysed reaction is L-histidinol phosphate + 2-oxoglutarate = 3-(imidazol-4-yl)-2-oxopropyl phosphate + L-glutamate. It participates in amino-acid biosynthesis; L-histidine biosynthesis; L-histidine from 5-phospho-alpha-D-ribose 1-diphosphate: step 7/9. This is Histidinol-phosphate aminotransferase from Thermococcus kodakarensis (strain ATCC BAA-918 / JCM 12380 / KOD1) (Pyrococcus kodakaraensis (strain KOD1)).